We begin with the raw amino-acid sequence, 475 residues long: Actin-related protein 10 (475 aa).

This sequence belongs to the actin family.

The protein resides in the cytoplasm. It is found in the cytoskeleton. The polypeptide is Actin-related protein 10 (Dictyostelium discoideum (Social amoeba)).